A 234-amino-acid polypeptide reads, in one-letter code: N-(5'-phosphoribosyl)anthranilate isomerase (234 aa).

The interval 211–234 (RAASSSPRPVDGESPAFQRSEKAG) is disordered.

Belongs to the TrpF family.

It carries out the reaction N-(5-phospho-beta-D-ribosyl)anthranilate = 1-(2-carboxyphenylamino)-1-deoxy-D-ribulose 5-phosphate. It functions in the pathway amino-acid biosynthesis; L-tryptophan biosynthesis; L-tryptophan from chorismate: step 3/5. The chain is N-(5'-phosphoribosyl)anthranilate isomerase from Afipia carboxidovorans (strain ATCC 49405 / DSM 1227 / KCTC 32145 / OM5) (Oligotropha carboxidovorans).